We begin with the raw amino-acid sequence, 954 residues long: Isoleucine--tRNA ligase (954 aa).

Positions 58–68 match the 'HIGH' region motif; sequence PYANGDIHIGH. E572 provides a ligand contact to L-isoleucyl-5'-AMP. The short motif at 613-617 is the 'KMSKS' region element; it reads KMSKS. K616 lines the ATP pocket. C917, C920, C937, and C940 together coordinate Zn(2+).

Belongs to the class-I aminoacyl-tRNA synthetase family. IleS type 1 subfamily. Monomer. The cofactor is Zn(2+).

It localises to the cytoplasm. It catalyses the reaction tRNA(Ile) + L-isoleucine + ATP = L-isoleucyl-tRNA(Ile) + AMP + diphosphate. Functionally, catalyzes the attachment of isoleucine to tRNA(Ile). As IleRS can inadvertently accommodate and process structurally similar amino acids such as valine, to avoid such errors it has two additional distinct tRNA(Ile)-dependent editing activities. One activity is designated as 'pretransfer' editing and involves the hydrolysis of activated Val-AMP. The other activity is designated 'posttransfer' editing and involves deacylation of mischarged Val-tRNA(Ile). This is Isoleucine--tRNA ligase from Photobacterium profundum (strain SS9).